Reading from the N-terminus, the 651-residue chain is UvrABC system protein C (651 aa).

In terms of domain architecture, GIY-YIG spans E20–I97. Positions K207–V242 constitute a UVR domain.

The protein belongs to the UvrC family. Interacts with UvrB in an incision complex.

It is found in the cytoplasm. Functionally, the UvrABC repair system catalyzes the recognition and processing of DNA lesions. UvrC both incises the 5' and 3' sides of the lesion. The N-terminal half is responsible for the 3' incision and the C-terminal half is responsible for the 5' incision. This Rickettsia akari (strain Hartford) protein is UvrABC system protein C.